Here is a 436-residue protein sequence, read N- to C-terminus: GTPase Der (436 aa).

2 consecutive EngA-type G domains span residues 4–167 (PVIA…PTDL) and 175–351 (IKFS…ENQN). Residues 10-17 (GRPNVGKS), 57-61 (DTGGI), 119-122 (NKAD), 181-188 (GRPNVGKS), 229-233 (DTAGI), and 294-297 (NKWD) each bind GTP. Residues 352-436 (RRIQSALLND…PIHLIPRQRK (85 aa)) enclose the KH-like domain.

The protein belongs to the TRAFAC class TrmE-Era-EngA-EngB-Septin-like GTPase superfamily. EngA (Der) GTPase family. Associates with the 50S ribosomal subunit.

GTPase that plays an essential role in the late steps of ribosome biogenesis. This Latilactobacillus sakei subsp. sakei (strain 23K) (Lactobacillus sakei subsp. sakei) protein is GTPase Der.